Consider the following 200-residue polypeptide: Recombination protein RecR (200 aa).

The segment at 59 to 74 adopts a C4-type zinc-finger fold; it reads CSVCFHLSADPVCDIC. One can recognise a Toprim domain in the interval 82–176; it reads TVICVVADSR…RVTRIAFGLP (95 aa).

This sequence belongs to the RecR family.

Its function is as follows. May play a role in DNA repair. It seems to be involved in an RecBC-independent recombinational process of DNA repair. It may act with RecF and RecO. This Acaryochloris marina (strain MBIC 11017) protein is Recombination protein RecR.